Consider the following 229-residue polypeptide: 2,3-bisphosphoglycerate-dependent phosphoglycerate mutase (229 aa).

Residues 7–14 (RHGQSEWN), 20–21 (TG), Arg-59, 86–89 (ERHY), Lys-97, 113–114 (RR), and 182–183 (GN) each bind substrate. The active-site Tele-phosphohistidine intermediate is His-8. The active-site Proton donor/acceptor is Glu-86.

This sequence belongs to the phosphoglycerate mutase family. BPG-dependent PGAM subfamily.

The catalysed reaction is (2R)-2-phosphoglycerate = (2R)-3-phosphoglycerate. It functions in the pathway carbohydrate degradation; glycolysis; pyruvate from D-glyceraldehyde 3-phosphate: step 3/5. Catalyzes the interconversion of 2-phosphoglycerate and 3-phosphoglycerate. This chain is 2,3-bisphosphoglycerate-dependent phosphoglycerate mutase, found in Listeria monocytogenes serotype 4a (strain HCC23).